The chain runs to 89 residues: Strongylocin 2 (89 aa).

Positions 1–22 are cleaved as a signal peptide; the sequence is MNIRTASFTFIVVMMILSQTMA. The propeptide occupies 23–38; sequence DRFFNEPEEDDHLVES. Residue Trp-39 is modified to 6'-bromotryptophan.

Post-translationally, contains 3 disulfide bonds.

Has antimicrobial activity against Gram-negative bacteria and Gram-positive bacteria with minimum inhibitory concentration (MIC) between 0.78 uM and 3.13 uM. This is Strongylocin 2 from Echinus esculentus (Sea urchin).